Reading from the N-terminus, the 247-residue chain is tRNA (guanine-N(1)-)-methyltransferase (247 aa).

S-adenosyl-L-methionine is bound by residues G115 and 135–140 (IGDYVL).

Belongs to the RNA methyltransferase TrmD family. Homodimer.

Its subcellular location is the cytoplasm. It carries out the reaction guanosine(37) in tRNA + S-adenosyl-L-methionine = N(1)-methylguanosine(37) in tRNA + S-adenosyl-L-homocysteine + H(+). Its function is as follows. Specifically methylates guanosine-37 in various tRNAs. The chain is tRNA (guanine-N(1)-)-methyltransferase from Alkaliphilus metalliredigens (strain QYMF).